The sequence spans 197 residues: Probable molybdenum cofactor guanylyltransferase (197 aa).

GTP-binding positions include 10-12 (LCG), K22, D73, and D102. D102 contributes to the Mg(2+) binding site.

It belongs to the MobA family. Requires Mg(2+) as cofactor.

It is found in the cytoplasm. It carries out the reaction Mo-molybdopterin + GTP + H(+) = Mo-molybdopterin guanine dinucleotide + diphosphate. Functionally, transfers a GMP moiety from GTP to Mo-molybdopterin (Mo-MPT) cofactor (Moco or molybdenum cofactor) to form Mo-molybdopterin guanine dinucleotide (Mo-MGD) cofactor. The sequence is that of Probable molybdenum cofactor guanylyltransferase from Methanothermobacter thermautotrophicus (strain ATCC 29096 / DSM 1053 / JCM 10044 / NBRC 100330 / Delta H) (Methanobacterium thermoautotrophicum).